Reading from the N-terminus, the 317-residue chain is Malate dehydrogenase (317 aa).

NAD(+) is bound by residues 7–13 and Asp34; that span reads GAAGGIG. Substrate-binding residues include Arg81 and Arg87. Residues Asn94 and 117 to 119 contribute to the NAD(+) site; that span reads VTN. 2 residues coordinate substrate: Asn119 and Arg153. Catalysis depends on His177, which acts as the Proton acceptor. Met231 contributes to the NAD(+) binding site.

The protein belongs to the LDH/MDH superfamily. MDH type 1 family. Homodimer.

It catalyses the reaction (S)-malate + NAD(+) = oxaloacetate + NADH + H(+). Functionally, catalyzes the reversible oxidation of malate to oxaloacetate. The chain is Malate dehydrogenase from Actinobacillus pleuropneumoniae serotype 5b (strain L20).